We begin with the raw amino-acid sequence, 292 residues long: Alpha-soluble NSF attachment protein (292 aa).

Serine 2 carries the post-translational modification N-acetylserine. Residue lysine 261 forms a Glycyl lysine isopeptide (Lys-Gly) (interchain with G-Cter in ubiquitin) linkage.

The protein belongs to the SNAP family. Binds to vacuolar cis-SNARE complexes composed of the v-SNAREs NYV1, VTI1 and YKT6, and the t-SNAREs VAM3 and VAM7. Interacts with SEC18.

The protein resides in the membrane. SNARE complex protein that binds to cis-SNARE complexes on membranes and is required for vesicular transport between the endoplasmic reticulum and the Golgi apparatus and for homotypic vacuole fusion. During the priming step of membrane fusion, is released from cis-SNARE complexes by SEC18 to establish a pool of unpaired SNAREs, which are required for interactions in trans during docking and fusion steps. Can displace HOPS from SNARE complexes, which may be a prerequisite for trans-SNARE complex disassembly and subsequent rounds of priming, docking and fusion. The chain is Alpha-soluble NSF attachment protein (SEC17) from Saccharomyces cerevisiae (strain ATCC 204508 / S288c) (Baker's yeast).